The chain runs to 349 residues: Small ribosomal subunit protein uS2 (349 aa).

The protein belongs to the universal ribosomal protein uS2 family.

In Methylobacterium nodulans (strain LMG 21967 / CNCM I-2342 / ORS 2060), this protein is Small ribosomal subunit protein uS2.